The sequence spans 121 residues: 18 kDa learning-associated protein of slug (121 aa).

Disordered stretches follow at residues 44-67 and 95-121; these read TMKT…GSME and AVKK…AIKW. Over residues 45 to 64 the composition is skewed to polar residues; sequence MKTTEPIQENKTSEGTSTDG.

This sequence belongs to the learning-associated protein family. Expressed predominantly in cerebral ganglia (at protein level). The mRNA is highly expressed in cerebral ganglia, and is detected at lower levels in visceral-pedal ganglia, head, and body, but is not detected in the tail.

The protein resides in the cytoplasm. Its subcellular location is the secreted. May be involved in modulating long-term memory formation and retention, at least with respect to odor-taste associative learning. This chain is 18 kDa learning-associated protein of slug, found in Lehmannia marginata (Tree slug).